The following is a 551-amino-acid chain: Probable alpha-glucosidase (551 aa).

The Nucleophile role is filled by Asp212. The active-site Proton donor is the Glu272.

It belongs to the glycosyl hydrolase 13 family.

The enzyme catalyses Hydrolysis of terminal, non-reducing (1-&gt;4)-linked alpha-D-glucose residues with release of alpha-D-glucose.. The polypeptide is Probable alpha-glucosidase (aglA) (Rhizobium meliloti (strain 1021) (Ensifer meliloti)).